The following is a 166-amino-acid chain: Cyclic pyranopterin monophosphate synthase (166 aa).

Substrate-binding positions include 83–85 (LCH) and 121–122 (ME). Asp136 is a catalytic residue.

Belongs to the MoaC family. In terms of assembly, homohexamer; trimer of dimers.

It carries out the reaction (8S)-3',8-cyclo-7,8-dihydroguanosine 5'-triphosphate = cyclic pyranopterin phosphate + diphosphate. Its pathway is cofactor biosynthesis; molybdopterin biosynthesis. In terms of biological role, catalyzes the conversion of (8S)-3',8-cyclo-7,8-dihydroguanosine 5'-triphosphate to cyclic pyranopterin monophosphate (cPMP). This Trichodesmium erythraeum (strain IMS101) protein is Cyclic pyranopterin monophosphate synthase.